Consider the following 1495-residue polypeptide: Collagen alpha-1(XVII) chain (1495 aa).

Positions 1–17 are enriched in basic and acidic residues; the sequence is MDSVTKKTRQDGSEVTE. A disordered region spans residues 1–138; the sequence is MDSVTKKTRQ…VRLQSASPSG (138 aa). The Cytoplasmic portion of the chain corresponds to 1 to 435; sequence MDSVTKKTRQ…CGSCCSWWKW (435 aa). Positions 1–535 are nonhelical region (NC16); it reads MDSVTKKTRQ…IERGYFRGER (535 aa). Over residues 19-32 the composition is skewed to polar residues; the sequence is QGGSSSGLKTSSHT. Low complexity predominate over residues 51–63; the sequence is SSGSGRLNSSSSG. 2 stretches are compositionally biased toward polar residues: residues 64 to 80 and 95 to 104; these read YRQTQSPSSTLTKSPGS and EGSSSANSSP. A helical; Signal-anchor for type II membrane protein membrane pass occupies residues 436–456; sequence LLGLLLAWLLLLGLLFGLIAL. Residues 457 to 1495 lie on the Extracellular side of the membrane; the sequence is AEEVRKLKSR…GRRRRRSVGV (1039 aa). 7 disordered regions span residues 532 to 824, 847 to 999, 1160 to 1185, 1201 to 1226, 1251 to 1278, 1295 to 1336, and 1396 to 1416; these read RGER…EKGS, DLQG…SSSQ, EFSGLVGPPGPAGPPGPPGIPGSSGI, SISGIQGPPGPPGPPGPPGFSGTGLL, RSYISGPPGPPGPRGPPGPKGDSGLVAG, GGSI…GSYG, and MSYTGQGPPGPPGPPGPPGIS. Positions 536 to 1482 are triple-helical region; it reads GEPGMKGDMG…KGEKGEKGEQ (947 aa). 2 stretches are compositionally biased toward low complexity: residues 702 to 711 and 761 to 773; these read PGAKGPAGQA and RPGAKGEPGAPGK. Residues 786–807 show a composition bias toward pro residues; the sequence is PGPPGPPGPIGPTGPPGVPGPV. Residues 809-818 show a composition bias toward low complexity; it reads PAGLPGQQGP. Pro residues-rich tracts occupy residues 871–886, 901–910, 946–955, 981–993, 1167–1179, 1208–1218, and 1257–1269; these read PRGPPGLPGPSGPPGR, PPGPPGPPGP, PPGPPGPPGPPGP, PPGPAGPPGPPGI, PPGPPGPPGPP, and PPGPPGPRGPPGP. The span at 1296 to 1308 shows a compositional bias: gly residues; sequence GSIGAEGSHGGSL. Residues 1309-1336 show a composition bias toward low complexity; sequence GASSSYGSSMSSSMSSYSASMGSDGSYG. Over residues 1403–1413 the composition is skewed to pro residues; the sequence is PPGPPGPPGPP. The N-linked (GlcNAc...) asparagine glycan is linked to N1424. The interval 1435–1495 is disordered; sequence THGTVRGPPG…GRRRRRSVGV (61 aa). The segment covering 1472 to 1481 has biased composition (basic and acidic residues); the sequence is PKGEKGEKGE. Positions 1483–1495 are nonhelical region (NC1); sequence MYSGRRRRRSVGV. Over residues 1486–1495 the composition is skewed to basic residues; sequence GRRRRRSVGV.

In terms of assembly, homotrimers of alpha 1(XVII)chains. Post-translationally, the intracellular/endo domain is disulfide-linked. In terms of processing, prolines at the third position of the tripeptide repeating unit (G-X-Y) are hydroxylated in some or all of the chains. The ectodomain is shedded from the surface of keratinocytes resulting in a 120-kDa soluble form, also named as 120 kDa linear IgA disease antigen homolog. The shedding is mediated by membrane-bound metalloproteases. Cornea specific.

The protein localises to the cell junction. It localises to the hemidesmosome. Its subcellular location is the membrane. It is found in the secreted. The protein resides in the extracellular space. The protein localises to the extracellular matrix. It localises to the basement membrane. Its function is as follows. May play a role in the integrity of hemidesmosome and the attachment of basal keratinocytes to the underlying basement membrane. The 120 kDa linear IgA disease antigen homolog is an anchoring filament component involved in dermal-epidermal cohesion. The protein is Collagen alpha-1(XVII) chain (COL17A1) of Gallus gallus (Chicken).